We begin with the raw amino-acid sequence, 216 residues long: Cytidylate kinase (216 aa).

ATP is bound at residue 7-15 (GPSGTGKST).

It belongs to the cytidylate kinase family. Type 1 subfamily.

It localises to the cytoplasm. The enzyme catalyses CMP + ATP = CDP + ADP. It carries out the reaction dCMP + ATP = dCDP + ADP. In Chlamydia trachomatis serovar D (strain ATCC VR-885 / DSM 19411 / UW-3/Cx), this protein is Cytidylate kinase.